The primary structure comprises 617 residues: Guanylate cyclase soluble subunit beta-2 (617 aa).

Histidine 26 contacts heme. The 129-residue stretch at 391–519 (TILFSDVVTF…DTVNTASRME (129 aa)) folds into the Guanylate cyclase domain. Over residues 577–586 (RSKTPVDHKG) the composition is skewed to basic and acidic residues. The tract at residues 577-605 (RSKTPVDHKGSTQKASLPTTKLQGSVQPS) is disordered. The segment covering 588-604 (TQKASLPTTKLQGSVQP) has biased composition (polar residues).

It belongs to the adenylyl cyclase class-4/guanylyl cyclase family. In terms of assembly, heterodimer of an alpha and a beta chain. It depends on heme as a cofactor. As to expression, expressed in gastric signet ring cell carcinoma, but not in the normal stomach.

The protein resides in the cytoplasm. The enzyme catalyses GTP = 3',5'-cyclic GMP + diphosphate. Its activity is regulated as follows. Activated by nitric oxide in the presence of magnesium or manganese ions. The sequence is that of Guanylate cyclase soluble subunit beta-2 (GUCY1B2) from Homo sapiens (Human).